Consider the following 105-residue polypeptide: Large ribosomal subunit protein uL24 (105 aa).

This sequence belongs to the universal ribosomal protein uL24 family. As to quaternary structure, part of the 50S ribosomal subunit.

In terms of biological role, one of two assembly initiator proteins, it binds directly to the 5'-end of the 23S rRNA, where it nucleates assembly of the 50S subunit. Functionally, one of the proteins that surrounds the polypeptide exit tunnel on the outside of the subunit. The polypeptide is Large ribosomal subunit protein uL24 (Nitrosospira multiformis (strain ATCC 25196 / NCIMB 11849 / C 71)).